Consider the following 557-residue polypeptide: Ribonuclease J 2 (557 aa).

4 residues coordinate Zn(2+): His-76, His-78, His-144, and Glu-166. 366–370 (HASSH) provides a ligand contact to substrate.

Belongs to the metallo-beta-lactamase superfamily. RNA-metabolizing metallo-beta-lactamase-like family. Bacterial RNase J subfamily. As to quaternary structure, homodimer, may be a subunit of the RNA degradosome. It depends on Zn(2+) as a cofactor.

It is found in the cytoplasm. Its function is as follows. An RNase that has 5'-3' exonuclease and possibly endoonuclease activity. Involved in maturation of rRNA and in some organisms also mRNA maturation and/or decay. The polypeptide is Ribonuclease J 2 (Staphylococcus saprophyticus subsp. saprophyticus (strain ATCC 15305 / DSM 20229 / NCIMB 8711 / NCTC 7292 / S-41)).